The following is a 122-amino-acid chain: Large ribosomal subunit protein bL12 (122 aa).

The protein belongs to the bacterial ribosomal protein bL12 family. Homodimer. Part of the ribosomal stalk of the 50S ribosomal subunit. Forms a multimeric L10(L12)X complex, where L10 forms an elongated spine to which 2 to 4 L12 dimers bind in a sequential fashion. Binds GTP-bound translation factors.

Forms part of the ribosomal stalk which helps the ribosome interact with GTP-bound translation factors. Is thus essential for accurate translation. The polypeptide is Large ribosomal subunit protein bL12 (Xanthomonas oryzae pv. oryzae (strain MAFF 311018)).